A 118-amino-acid polypeptide reads, in one-letter code: T cell receptor gamma variable 4 (118 aa).

The first 17 residues, 1-17 (MQWALAVLLAFLSPASQ), serve as a signal peptide directing secretion. Positions 18–118 (KSSNLEGRTK…GVYYCATWDG (101 aa)) constitute an Ig-like domain. Cysteines 41 and 113 form a disulfide. N106 carries N-linked (GlcNAc...) asparagine glycosylation.

Gamma-delta TR is a heterodimer composed of a gamma and delta chain; disulfide-linked. The gamma-delta TR is associated with the transmembrane signaling CD3 coreceptor proteins following the stoichiometry: a single gamma-delta TR heterodimer associates with one CD3D-CD3E heterodimer, one CD3G-CD3E heterodimer and one CD247 homodimer forming a stable octameric structure. Upon activation, gamma-delta TR complex associates with FCER1G to initiate intracellular signaling.

The protein localises to the cell membrane. In terms of biological role, v region of the variable domain of T cell receptor (TR) gamma chain that participates in the antigen recognition. Gamma-delta TRs recognize a variety of self and foreign non-peptide antigens frequently expressed at the epithelial boundaries between the host and external environment, including endogenous lipids presented by MH-like protein CD1D and phosphoantigens presented by butyrophilin-like molecule BTN3A1. Upon antigen recognition induces rapid, innate-like immune responses involved in pathogen clearance and tissue repair. Binding of gamma-delta TR complex to antigen triggers phosphorylation of immunoreceptor tyrosine-based activation motifs (ITAMs) in the CD3 chains by the LCK and FYN kinases, allowing the recruitment, phosphorylation, and activation of ZAP70 that facilitates phosphorylation of the scaffolding proteins LCP2 and LAT. This lead to the formation of a supramolecular signalosome that recruits the phospholipase PLCG1, resulting in calcium mobilization and ERK activation, ultimately leading to T cell expansion and differentiation into effector cells. Gamma-delta TRs are produced through somatic rearrangement of a limited repertoire of variable (V), diversity (D), and joining (J) genes. The potential diversity of gamma-delta TRs is conferred by the unique ability to rearrange (D) genes in tandem and to utilize all three reading frames. The combinatorial diversity is considerably increased by the sequence exonuclease trimming and random nucleotide (N) region additions which occur during the V-(D)-J rearrangements. The protein is T cell receptor gamma variable 4 of Homo sapiens (Human).